The chain runs to 77 residues: Acyl carrier protein (77 aa).

Residues 1–76 (MADFEKVKSI…DVTKFIDNLK (76 aa)) form the Carrier domain. Ser36 is subject to O-(pantetheine 4'-phosphoryl)serine.

Belongs to the acyl carrier protein (ACP) family. Post-translationally, 4'-phosphopantetheine is transferred from CoA to a specific serine of apo-ACP by AcpS. This modification is essential for activity because fatty acids are bound in thioester linkage to the sulfhydryl of the prosthetic group.

It localises to the cytoplasm. The protein operates within lipid metabolism; fatty acid biosynthesis. Its function is as follows. Carrier of the growing fatty acid chain in fatty acid biosynthesis. The chain is Acyl carrier protein from Leptospira borgpetersenii serovar Hardjo-bovis (strain JB197).